The chain runs to 215 residues: UPF0502 protein YceH (215 aa).

Lysine 80 is modified (N6-acetyllysine).

Belongs to the UPF0502 family.

The protein is UPF0502 protein YceH of Escherichia coli O45:K1 (strain S88 / ExPEC).